We begin with the raw amino-acid sequence, 488 residues long: Facilitated trehalose transporter Tret1-2 homolog (488 aa).

Residues 1–28 (MKILMRADTHVSYSVPAEGTKANFTFSQ) lie on the Cytoplasmic side of the membrane. The chain crosses the membrane as a helical span at residues 29–49 (VLAALSVSLCSLVVGFVSAYT). Over 50-72 (SPALVSMTDRTITSFEVTKDAGS) the chain is Extracellular. The chain crosses the membrane as a helical span at residues 73–93 (WVGGIMPLAALAGGITGGPLI). Topologically, residues 94–105 (EYLGRRNTILAT) are cytoplasmic. The chain crosses the membrane as a helical span at residues 106–126 (AVPFIVSSLLIACAVNVIMIL). The Extracellular portion of the chain corresponds to 127-129 (CGR). The chain crosses the membrane as a helical span at residues 130 to 150 (FLTGFCVGIASLSLPVYLGET). The Cytoplasmic portion of the chain corresponds to 151-160 (LQPEVRGTLG). A helical transmembrane segment spans residues 161-181 (LLPTALGNIGILVCYVAGSFM). N-linked (GlcNAc...) asparagine glycosylation is present at Asn182. Residues 182–184 (NWS) are Extracellular-facing. Residues 185-205 (ILAFLGAALPVPFLILMIIIP) form a helical membrane-spanning segment. The Cytoplasmic portion of the chain corresponds to 206–268 (ETPRWFVNRG…ELFKRINLKP (63 aa)). The chain crosses the membrane as a helical span at residues 269 to 289 (LSISLGLMFFQQFSGINAVIF). Over 290-305 (YTVQIFKDAGSTIDSN) the chain is Extracellular. Residues 306 to 326 (LCTIIVGIVNFFATFMGIILI) traverse the membrane as a helical segment. The Cytoplasmic portion of the chain corresponds to 327–332 (DRLGRK). The helical transmembrane segment at 333-353 (ILLYVSDIAMILTLSILGGFF) threads the bilayer. The Extracellular portion of the chain corresponds to 354–372 (YCKAHGPDVSHLGWLPLSC). Residues 373–393 (FVIYILGFSLGFGPIPWLMMG) form a helical membrane-spanning segment. Over 394–402 (EILPAKIRG) the chain is Cytoplasmic. A helical transmembrane segment spans residues 403 to 423 (PAASVVTAFNWFCTFVVTKTF). Residues 424–433 (QDLTVAMGPH) lie on the Extracellular side of the membrane. The chain crosses the membrane as a helical span at residues 434–454 (GAFWLFGVVCIVGLFFVIIYV). Residues 455–488 (PETRGKSLEEIERKMMGRVPISAVVNIKPFSFNM) lie on the Cytoplasmic side of the membrane.

Belongs to the major facilitator superfamily. Sugar transporter (TC 2.A.1.1) family. Trehalose transporter subfamily.

It is found in the cell membrane. Fails to transport trehalose. This chain is Facilitated trehalose transporter Tret1-2 homolog, found in Drosophila sechellia (Fruit fly).